We begin with the raw amino-acid sequence, 346 residues long: Melanoma-associated antigen B3 (346 aa).

Residues 1-35 are disordered; sequence MPRGQKSTLHAREKRQQTRGQTQDHQGAQITATNK. Polar residues predominate over residues 18–33; the sequence is TRGQTQDHQGAQITAT. Positions 111 to 310 constitute an MAGE domain; sequence LIMKTNMLVQ…SAFQFWYEEA (200 aa).

In terms of tissue distribution, expressed in testis.

The polypeptide is Melanoma-associated antigen B3 (MAGEB3) (Homo sapiens (Human)).